A 121-amino-acid polypeptide reads, in one-letter code: Small ribosomal subunit protein uS13 (121 aa).

Positions 93–121 (RGLPMRGQRTRTNARTRKGPRKAAQSLKK) are disordered.

The protein belongs to the universal ribosomal protein uS13 family. In terms of assembly, part of the 30S ribosomal subunit. Forms a loose heterodimer with protein S19. Forms two bridges to the 50S subunit in the 70S ribosome.

In terms of biological role, located at the top of the head of the 30S subunit, it contacts several helices of the 16S rRNA. In the 70S ribosome it contacts the 23S rRNA (bridge B1a) and protein L5 of the 50S subunit (bridge B1b), connecting the 2 subunits; these bridges are implicated in subunit movement. Contacts the tRNAs in the A and P-sites. This is Small ribosomal subunit protein uS13 from Variovorax paradoxus (strain S110).